A 395-amino-acid polypeptide reads, in one-letter code: MVQSLHEFLEENINYLKENGLYNEIDTIEGANGPEIKINGKSYINLSSNNYLGLATNEDLKSAAKAAIDTHGVGAGAVRTINGTLDLHDELEETLAKFKGTEAAIAYQSGFNCNMAAISAVMNKNDAILSDELNHASIIDGCRLSKAKIIRVNHSDMDDLRAKAKEAVESGQYNKVMYITDGVFSMDGDVAKLPEIVEIAEEFGLLTYVDDAHGSGVMGKGAGTVKHFGLQDKIDFQIGTLSKAIGVVGGYVAGTKELIDWLKAQSRPFLFSTSLAPGDTKAITEAVKKLMASTELHDKLWDNAQYLKNGLSKLGYDTGESETPITPVIIGEEKTTQEFSKRLKDEGVYVKSIVFPTVPRGTGRVRNMPTAAHTKDMLDEAIAAYEKVGKEMNLI.

110–111 (GF) is a binding site for pyridoxal 5'-phosphate. His-135 lines the substrate pocket. Pyridoxal 5'-phosphate is bound by residues Ser-185, 210–213 (DDAH), and 240–243 (TLSK). Lys-243 bears the N6-(pyridoxal phosphate)lysine mark. A substrate-binding site is contributed by Thr-357.

Belongs to the class-II pyridoxal-phosphate-dependent aminotransferase family. In terms of assembly, homodimer. The cofactor is pyridoxal 5'-phosphate.

The chain is Putative pyridoxal phosphate-dependent acyltransferase from Staphylococcus aureus (strain MRSA252).